Reading from the N-terminus, the 355-residue chain is Guanine nucleotide-binding protein G(i) subunit alpha-2 (355 aa).

A lipid anchor (N-myristoyl glycine) is attached at Gly2. Cys3 carries the S-palmitoyl cysteine lipid modification. Residues 32–355 (REVKLLLLGA…KNNLKDCGLF (324 aa)) form the G-alpha domain. The G1 motif stretch occupies residues 35 to 48 (KLLLLGAGESGKST). GTP contacts are provided by residues 40-47 (GAGESGKS), 176-182 (LRTRVKT), 201-205 (DVGGQ), 270-273 (NKKD), and Ala327. Ser47 is a binding site for Mg(2+). Residues 174–182 (DVLRTRVKT) form a G2 motif region. The residue at position 179 (Arg179) is an ADP-ribosylarginine; by cholera toxin. Position 182 (Thr182) interacts with Mg(2+). The G3 motif stretch occupies residues 197–206 (FKMFDVGGQR). Gln205 carries the deamidated glutamine; by Photorhabdus PAU_02230 modification. Residues 266 to 273 (ILFLNKKD) are G4 motif. The G5 motif stretch occupies residues 325–330 (TCATDT). Residue Cys352 is modified to ADP-ribosylcysteine; by pertussis toxin.

This sequence belongs to the G-alpha family. G(i/o/t/z) subfamily. In terms of assembly, g proteins are composed of 3 units; alpha, beta and gamma. The alpha chain contains the guanine nucleotide binding site. In this context, interacts with GNB2. Interacts with GPSM1. Interacts with RGS12 and RGS14. Interacts with UNC5B. Interacts (inactive GDP-bound form) with NUCB1 (via GBA motif); the interaction leads to activation of GNAI3. Interacts (inactive GDP-bound form) with CCDC88C/DAPLE (via GBA motif). Interacts (inactive GDP-bound form) with CCDC8A/GIV (via GBA motif). Interacts with CXCR1 and CXCR2. (Microbial infection) Deamidated at Gln-205 by Photorhabdus asymbiotica toxin PAU_02230, blocking GTP hydrolysis of heterotrimeric GNAQ or GNA11 and G-alphai (GNAI1, GNAI2 or GNAI3) proteins, thereby activating RhoA.

Its subcellular location is the cytoplasm. It localises to the cytoskeleton. It is found in the microtubule organizing center. The protein localises to the centrosome. The protein resides in the cell membrane. Its subcellular location is the membrane. Functionally, guanine nucleotide-binding proteins (G proteins) are involved as modulators or transducers in various transmembrane signaling systems. The G(i) proteins are involved in hormonal regulation of adenylate cyclase: they inhibit the cyclase in response to beta-adrenergic stimuli. May play a role in cell division. Regulates the cell surface density of dopamine receptors DRD2 by sequestrating them as an intracellular pool. The sequence is that of Guanine nucleotide-binding protein G(i) subunit alpha-2 (GNAI2) from Homo sapiens (Human).